The sequence spans 244 residues: Coenzyme Q-binding protein COQ10 homolog B, mitochondrial (244 aa).

Belongs to the COQ10 family. Interacts with coenzyme Q.

Its subcellular location is the mitochondrion inner membrane. Its function is as follows. Required for the function of coenzyme Q in the respiratory chain. May serve as a chaperone or may be involved in the transport of Q6 from its site of synthesis to the catalytic sites of the respiratory complexes. The polypeptide is Coenzyme Q-binding protein COQ10 homolog B, mitochondrial (coq10b) (Xenopus laevis (African clawed frog)).